The chain runs to 374 residues: Tomoregulin-2 (374 aa).

An N-terminal signal peptide occupies residues 1–40 (MVLWESPRQCSSWTLCEGFCWLLLLPVMLLIVARPVKLAA). Residues 41-320 (FPTSLSDCQT…VPGPVRFQYV (280 aa)) lie on the Extracellular side of the membrane. Kazal-like domains follow at residues 90–137 (VCQF…SCAT) and 181–229 (VCNI…RCQD). Intrachain disulfides connect Cys91–Cys121, Cys95–Cys114, Cys103–Cys135, Cys182–Cys213, Cys186–Cys206, and Cys195–Cys227. Residue Asn204 is glycosylated (N-linked (GlcNAc...) (complex) asparagine; atypical). N-linked (GlcNAc...) asparagine glycosylation is present at Asn230. In terms of domain architecture, EGF-like spans 261–301 (HHIPCPEHYNGFCMHGKCEHSINMQEPSCRCDAGYTGQHCE). 3 disulfides stabilise this stretch: Cys265–Cys278, Cys273–Cys289, and Cys291–Cys300. Residues 303-320 (KDYSVLYVVPGPVRFQYV) form a required for shedding region. A helical transmembrane segment spans residues 321–341 (LIAAVIGTIQIAVICVVVLCI). Residues 342–374 (TRKCPRSNRIHRQKQNTGHYSSDNTTRASTRLI) are Cytoplasmic-facing. Positions 353–374 (RQKQNTGHYSSDNTTRASTRLI) are disordered. Residues 356–374 (QNTGHYSSDNTTRASTRLI) are compositionally biased toward polar residues.

It belongs to the tomoregulin family. Post-translationally, O-glycosylated; contains chondroitin sulfate glycosaminoglycans. A soluble form (TMEFF2-ECD) is produced by proteolytic shedding. This shedding can be induced by phorbol ester or pro-inflammatory cytokines such as TNFalpha, and is mediated by ADAM17. As to expression, highly expressed in adult and fetal brain, spinal cord and prostate. Expressed in all brain regions except the pituitary gland, with highest levels in amygdala and corpus callosum. Expressed in the pericryptal myofibroblasts and other stromal cells of normal colonic mucosa. Expressed in prostate carcinoma. Down-regulated in colorectal cancer. Present in Alzheimer disease plaques (at protein level). Isoform 3 is expressed weakly in testis and at high levels in normal and cancerous prostate.

It localises to the membrane. Its subcellular location is the secreted. Functionally, may be a survival factor for hippocampal and mesencephalic neurons. The shedded form up-regulates cancer cell proliferation, probably by promoting ERK1/2 phosphorylation. The polypeptide is Tomoregulin-2 (TMEFF2) (Homo sapiens (Human)).